Reading from the N-terminus, the 243-residue chain is Ribonuclease HII (243 aa).

In terms of domain architecture, RNase H type-2 spans 23 to 217 (SVIVGVDEVG…LSSECEGAPP (195 aa)). 3 residues coordinate a divalent metal cation: Asp29, Glu30, and Asp122. The tract at residues 223–243 (LSSTGIKTPVDGRGDAVATRD) is disordered. The span at 232-243 (VDGRGDAVATRD) shows a compositional bias: basic and acidic residues.

The protein belongs to the RNase HII family. Requires Mn(2+) as cofactor. Mg(2+) is required as a cofactor.

The protein resides in the cytoplasm. The enzyme catalyses Endonucleolytic cleavage to 5'-phosphomonoester.. Functionally, endonuclease that specifically degrades the RNA of RNA-DNA hybrids. The sequence is that of Ribonuclease HII from Anaplasma marginale (strain St. Maries).